An 85-amino-acid polypeptide reads, in one-letter code: U4-theraphotoxin-Hhn1a (85 aa).

The N-terminal stretch at 1 to 22 (MKVTLISILTCAAVLVLHTTAA) is a signal peptide. A propeptide spanning residues 23-48 (EELEAESQLMEVGMPDTELAAVDEER) is cleaved from the precursor. Disulfide bonds link Cys-52–Cys-66, Cys-56–Cys-77, and Cys-71–Cys-82.

The protein belongs to the neurotoxin 12 (Hwtx-2) family. 02 (Hwtx-2) subfamily. In terms of assembly, monomer. In terms of tissue distribution, expressed by the venom gland.

The protein resides in the secreted. In terms of biological role, neurotoxin active on both insects and mammals. The chain is U4-theraphotoxin-Hhn1a from Cyriopagopus hainanus (Chinese bird spider).